A 1340-amino-acid polypeptide reads, in one-letter code: MEVQSLLNFDLDPGPVDQSILVWQHEHRSAAIWEDEVPPRELTCRHKLLGMRDWPLDPLVCQKLIEFGLYGVYKVAFIQLDYALITALVERWRPETHTFHLPAGEITVTLQDVNILLGLRVDGPAVTGSTKYNWADLCEDLLGHRPGPKDLHGSHVSLAWLRENFRNLPADPDEVTLKCHTRAFVLALMSGFLYGDKSKHDVALTFLPLLRDFDEVAKLSWGSATLALLYRELCRASKRTVSTICGPLVLLQLWAWERLHVGRPGRLKDVGASYMDGIDGPLPDPLGCRWRASLSHKENPRGGLDFYRDQFDQQKDEQVIWQPYTPDLLAKIPLICVSGENIWRTVAPLICFDVVEWHRPDRVLRQFGLHQTIPAPCDNEKALHAIDKRGKSEYDWSARHSRHIGLWEARVSSVVSGEPECSPMDYNDPYMEWYRRITRRIISPMNERRPGQFLPTGFAFQVLVQRVAAIHARSRASLEEELTVGSARQTLQDIVDMCAGALQLNAPLGSLSNGSVAQAPTPEPFLMLPQPTPTIIPQKPMGGEMVCLPLNDMEIDDGLAAEPLELMPPVQDIGCEQSLSSVSQKPLFWPSGGKLTFSWVCEVMLVFDWSSKNLPPCEFSSVLPFNVLDELVLFASKILKKEPNCVRIDSEKAEVVVVGDLHGQLHDLLYLMQDAGFPDGDRFYVFNGNYVDIGAWGLETFLLLLSWKVLLPARVYLLRGSHESESCTSMYGFKNEVLTKYGDKGAAVYKKCLECFQLLPLASVIAGKVYTAHGGLFRDVSSFLSDKQERNRKRKRTQKKQTDNTVLDTEDRSESLPLGSLKDLSKVKRRVIDPPTEGSNLIPGDILWSDPSKDTGLFLNKERGIGLLWGPDCTAKFLQDNNLKWIIRGKGAPDERAKRDDLAPMNGGYAEDHEGLITLFSAPDHPQFQDTEERHNNKAAYIILQIPECEELKFQPLEAVSPRPKAEAYYDFRRLIHPPSNLVHNITNSVDSPSSVPDDKDNLISSENVEYKSMDLSEQMEVDEKDDVDSKYSESITDEVAAFGTPASGDRDMVDFSDKTENGSKEADHSETAEISKDLSDTVGKPESCSRTRGTYEAIGTDAKLKSNTPEAINLEPQPGCDLYVPDSGNSTESRTEKAAEEACVGRISIDDCSTTGDAAVELEITYDEKLDRVVTEITGNDAAECMTDGNRDIATDGAENLEPSTSKLNYSEPSEDIDDSTMKFRHNTSCVADSDLETVNGGVNADCSSSSKCLTSKPVVAHDKFTNLTKPSHDKGYGESADKPERVIKLVTYSKRKSSDKKHMIESNEDPQQKVNDSVDSKNKGSLDKSQSVPGDMDS.

Mn(2+)-binding residues include Asp-660 and His-662. The active-site Proton donor is the His-722. His-773 contacts Mn(2+). Disordered stretches follow at residues 788–814 (QERN…DRSE), 1012–1093 (KSMD…SRTR), 1196–1218 (TDGA…SEDI), and 1266–1340 (FTNL…DMDS). Positions 790–799 (RNRKRKRTQK) are enriched in basic residues. Residues 1018–1027 (EQMEVDEKDD) show a composition bias toward acidic residues. Residues 1049-1080 (GDRDMVDFSDKTENGSKEADHSETAEISKDLS) are compositionally biased toward basic and acidic residues. A compositionally biased stretch (polar residues) spans 1203–1213 (EPSTSKLNYSE). Composition is skewed to basic and acidic residues over residues 1266-1289 (FTNL…ERVI) and 1318-1328 (DSVDSKNKGSL).

It belongs to the PPP phosphatase family. PP-7 subfamily. Mn(2+) serves as cofactor. In terms of tissue distribution, expressed in root tips, the shoot apical meristem (SAM), leaf vasculature, hydathodes and mature flowers.

The protein localises to the nucleus. The enzyme catalyses O-phospho-L-seryl-[protein] + H2O = L-seryl-[protein] + phosphate. The catalysed reaction is O-phospho-L-threonyl-[protein] + H2O = L-threonyl-[protein] + phosphate. In terms of biological role, maybe required to maintain cell division activity in meristematic cells. The chain is Serine/threonine-protein phosphatase 7 long form homolog from Arabidopsis thaliana (Mouse-ear cress).